Here is a 464-residue protein sequence, read N- to C-terminus: Argininosuccinate lyase (464 aa).

The protein belongs to the lyase 1 family. Argininosuccinate lyase subfamily.

The protein resides in the cytoplasm. The enzyme catalyses 2-(N(omega)-L-arginino)succinate = fumarate + L-arginine. It functions in the pathway amino-acid biosynthesis; L-arginine biosynthesis; L-arginine from L-ornithine and carbamoyl phosphate: step 3/3. In Stutzerimonas stutzeri (strain A1501) (Pseudomonas stutzeri), this protein is Argininosuccinate lyase.